We begin with the raw amino-acid sequence, 177 residues long: Anditomin synthesis protein L (177 aa).

Helical transmembrane passes span 54–74 (VVNS…PFIM) and 117–137 (IVNF…YMVF). The N-linked (GlcNAc...) asparagine glycan is linked to Asn165.

The protein resides in the membrane. It participates in secondary metabolite biosynthesis; terpenoid biosynthesis. Part of the gene cluster that mediates the biosynthesis of anditomin, a fungal meroterpenoid. The first step of the pathway is the synthesis of 3,5-dimethylorsellinic acid (DMOA) by the polyketide synthase andM. DMOA is then converted to the phthalide compound 5,7-dihydroxy-4,6-dimethylphthalide (DHDMP) by the cytochrome P450 monooxygenase andK, which is further prenylated by the prenyltransferase andD to yield farnesyl-DHDMP. Further epoxidation by the FAD-dependent monooxygenase andE leads to epoxyfarnesyl-DHDMP. The next step involves the terpene cyclase andB that converts epoxyfarnesyl-DHDMP into preandiloid A through opening of the epoxide ring followed by the cyclization of the farnesyl moiety. Preandiloid A is in turn oxidized at the C-3 hydroxyl group to yield preandiloid B by the dehydrogenase andC. The dioxygenase andA is solely responsible for the dehydrogenation of preandiloid B leading to the enone preandiloid C, as well as for the intriguing structural rearrangement to generate the bicyclo[2.2.2]octane core, transforming preandiloid C into andiconin. FAD-binding monooxygenase andJ then produces andilesin D which is reduced by dehydrogenase andI to yield andilesin A. Action of acetyltransferase andG followed by a spontaneous acetate elimination leads then to andilesin B, which is in turn substrate of the short chain dehydrogenase andH to yield andilesin C. Finally, the dioxygenase andF catalyzes the transformation of andilesin C to anditomin. The exact role of andL within the anditomin biosynthetic pathway has not been identified yet. The protein is Anditomin synthesis protein L of Emericella variicolor (Aspergillus stellatus).